The sequence spans 239 residues: Large ribosomal subunit protein uL2 (239 aa).

The segment at 205–224 (GGHQHCGRPKTVARGTSPGR) is disordered.

The protein belongs to the universal ribosomal protein uL2 family. Part of the 50S ribosomal subunit. Forms a bridge to the 30S subunit in the 70S ribosome.

Its function is as follows. One of the primary rRNA binding proteins. Required for association of the 30S and 50S subunits to form the 70S ribosome, for tRNA binding and peptide bond formation. It has been suggested to have peptidyltransferase activity; this is somewhat controversial. Makes several contacts with the 16S rRNA in the 70S ribosome. This is Large ribosomal subunit protein uL2 from Methanoculleus marisnigri (strain ATCC 35101 / DSM 1498 / JR1).